Here is a 204-residue protein sequence, read N- to C-terminus: MSLPGKFITLEGVDGAGKSTHVGFVAEWLRGQGREVIVTREPGGTALGETLRELLLHREMAADTELLLMFAARQQHLAELILPALARGAWVVSDRFTDASYAYQCGGRRIAAERIAALEDWVQRGFAPDLTLLFDVPPAVAEERRSSVRAADRFEQEAGSFFARVRDAYLVRARAEPHRIHVLDARQTIDAVQAEIARLLQDLT.

12–19 (GVDGAGKS) is a binding site for ATP.

Belongs to the thymidylate kinase family.

The enzyme catalyses dTMP + ATP = dTDP + ADP. Its function is as follows. Phosphorylation of dTMP to form dTDP in both de novo and salvage pathways of dTTP synthesis. The sequence is that of Thymidylate kinase from Thiobacillus denitrificans (strain ATCC 25259 / T1).